Consider the following 84-residue polypeptide: Molybdopterin synthase sulfur carrier subunit (84 aa).

The residue at position 84 (G84) is a 1-thioglycine; alternate. G84 bears the Glycyl adenylate; alternate mark.

It belongs to the MoaD family. MOCS2A subfamily. As to quaternary structure, heterotetramer; composed of 2 small (MOCS2A) and 2 large (MOCS2B) subunits. Post-translationally, C-terminal thiocarboxylation occurs in 2 steps, it is first acyl-adenylated (-COAMP) via the hesA/moeB/thiF part of MOCS3, then thiocarboxylated (-COSH) via the rhodanese domain of MOCS3.

It localises to the cytoplasm. Its pathway is cofactor biosynthesis; molybdopterin biosynthesis. In terms of biological role, acts as a sulfur carrier required for molybdopterin biosynthesis. Component of the molybdopterin synthase complex that catalyzes the conversion of precursor Z into molybdopterin by mediating the incorporation of 2 sulfur atoms into precursor Z to generate a dithiolene group. In the complex, serves as sulfur donor by being thiocarboxylated (-COSH) at its C-terminus by MOCS3. After interaction with MOCS2B, the sulfur is then transferred to precursor Z to form molybdopterin. The protein is Molybdopterin synthase sulfur carrier subunit of Caenorhabditis briggsae.